The chain runs to 258 residues: Synapse differentiation-inducing gene protein 1 (258 aa).

Residues 1–181 (MDGIIEQKSV…NFLMMPPRDH (181 aa)) lie on the Cytoplasmic side of the membrane. Serine 137 carries the phosphoserine modification. Residues 182 to 202 (LGLSVFSMLCCFWPLGIAAFY) form a helical membrane-spanning segment. The Extracellular portion of the chain corresponds to 203–228 (LSHETNKAVAKGDFHQASTSSRRALF). Residues 229–249 (LAVLSITIGTGIYVGVAVALI) constitute an intramembrane region (helical). At 250–258 (AYLSKNNHL) the chain is on the extracellular side.

Belongs to the CD225/Dispanin family. As to quaternary structure, homodimer. Interacts with GRIA1 and GRIA2. Brain-specific. Expressed in Purkinje neurons in cerebellum. Also detected in the hippocampus. Found at excitatory synapses and postsynaptic cells.

The protein localises to the cell membrane. It is found in the early endosome membrane. Its subcellular location is the postsynaptic density membrane. The protein resides in the synapse. It localises to the cell projection. The protein localises to the dendrite. It is found in the dendritic spine. Its function is as follows. May regulate AMPA receptor content at nascent synapses, and have a role in postsynaptic development and maturation. The sequence is that of Synapse differentiation-inducing gene protein 1 (Syndig1) from Mus musculus (Mouse).